We begin with the raw amino-acid sequence, 692 residues long: MGERGELVSDLHPSDDHDADPRLAPLLAWRQQLVDSGAVAPRSFKEAHLRLVLRSGRTDVEQIRAMLPGSVAEHAEEMARILAELTPAAPEPDPPPVPEPQPEPEPGPGKHRSPETDEPPVATTTEIPIPTTGFAPFQFSSQQVALHDITVQRTDAAVELSWPPYEAPDDEAARDISVVMYRVVSSDDQAPYSPDPAHLVALTEEPKATDERQQVSPVRHYQVWVNVGASEAAARKAQPVLYATAVLVRPVTGFEIREDAGWVIGQWTAPPGVTAVHVFRVPIDEVDRDEAQYRILTAGENLAGFVDTEPVRGQRYRYRARCAVNVDGVVRLSEAAEADVELAAALMPVTDLVVETAADGASCDLSWTPPAGGQVAIYRSQNGPSAGAEAIELPQGALEQVGLTPELRVTQDLTEETGSDGRRRARLTGVTWPSEWSRAYFTPVTLMGERAMLGRTLSSVRTGTIRDIELAEYCNKQVLTFDWPDGAASVIVYLAPKGHDPRSGLNGRSFEISLEEYERYGGMHLTGQLPVGGCSLHLAPVAFAGGRRVVGAFSSIEYRGLLRLQYAVRIGRDPNGFPTTATIALRAEQNVPGSPGFVLVNNPQRLPLSVHDGHPVDVAPLDARGQLADHPSKELRWSALTTSGDGELWAANLSGLQGWIRLFVNIGSPAQLRVIALLDPPVETLRLTAATL.

Residues 1-21 show a composition bias toward basic and acidic residues; sequence MGERGELVSDLHPSDDHDADP. 2 disordered regions span residues 1–23 and 87–134; these read MGERGELVSDLHPSDDHDADPRL and PAAP…TTGF. The segment covering 89 to 107 has biased composition (pro residues); the sequence is APEPDPPPVPEPQPEPEPG.

May be involved in assembly of the ESX-1 / type VII specialized secretion system (T7SS), which exports several proteins including EsxA and EsxB. Involved in DNA conjugation in recipient (MKD8) but not donor (mc(2)155) strain. The sequence is that of Putative ESX-1 scaffolding and assembly protein SaeA (saeA) from Mycolicibacterium smegmatis (strain MKD8) (Mycobacterium smegmatis).